The sequence spans 285 residues: UPF0603 protein At1g54780, chloroplastic (285 aa).

2 disordered regions span residues 1–48 and 228–251; these read METL…LSTR and GQPD…TKEE. The span at 22–40 shows a compositional bias: polar residues; sequence HQTKPTSHSLSLSKPTTFS. The span at 238–251 shows a compositional bias: basic and acidic residues; it reads KDSKRESNFKTKEE. Residues 259–279 form a helical membrane-spanning segment; it reads FSLVVGGLLVIAFVVPMAQYF.

This sequence belongs to the UPF0603 family.

It is found in the plastid. It localises to the chloroplast thylakoid membrane. This Arabidopsis thaliana (Mouse-ear cress) protein is UPF0603 protein At1g54780, chloroplastic.